A 312-amino-acid chain; its full sequence is Putative S-adenosyl-L-methionine-dependent methyltransferase Mjls_0078 (312 aa).

S-adenosyl-L-methionine-binding positions include Asp134 and 163–164 (DL).

It belongs to the UPF0677 family.

Functionally, exhibits S-adenosyl-L-methionine-dependent methyltransferase activity. The protein is Putative S-adenosyl-L-methionine-dependent methyltransferase Mjls_0078 of Mycobacterium sp. (strain JLS).